A 344-amino-acid chain; its full sequence is FCS-Like Zinc finger 10 (344 aa).

Residues 270–314 (DFLSFCYGCSKKLGMGEDIYMYSGYKAFCSSECRSKEIDLDEEME) form an FLZ-type zinc finger. Residues 309–320 (LDEEMEDGDEEE) show a composition bias toward acidic residues. The segment at 309 to 344 (LDEEMEDGDEEEAIKSVSSSDKESKKKSNGVFFTVG) is disordered.

Belongs to the FLZ family. Interacts with KIN10 and KIN11 via its FLZ-type zinc finger domain. Interacts with KINB1, KINB2 and KINB3 via its N-terminal part. Forms homodimer and heterodimer with FLZ2 and FLZ12 in vitro. Early expressed in hypocotyl and cotyledon and preferentially in the stelar region of the shoot and root. Later expressed in root-shoot junction, lateral root, old or senescing leaves and in pistil and pollen of flower buds or open flowers.

The protein localises to the cytoplasm. The protein resides in the nucleus. It localises to the endoplasmic reticulum. In terms of biological role, may act as an adapter to facilitate the interaction of SnRK1 complex with effector proteins, conferring tissue- and stimulus-type specific differences in the SnRK1 regulation pathway. Negatively regulates KIN10 leading to a repression of the SnRK1 signaling pathway. In Arabidopsis thaliana (Mouse-ear cress), this protein is FCS-Like Zinc finger 10.